The sequence spans 109 residues: uncharacterized protein (109 aa).

In terms of domain architecture, HTH hxlR-type spans 10 to 109 (APFEYTLSLI…WGMAQGGPHM (100 aa)).

This is an uncharacterized protein from Bacillus subtilis (strain 168).